Here is a 1073-residue protein sequence, read N- to C-terminus: Carbamoyl phosphate synthase large chain (1073 aa).

Residues proline 2–glutamate 403 are carboxyphosphate synthetic domain. Residues arginine 129, arginine 169, glycine 175, glycine 176, glutamate 208, leucine 210, glutamate 215, glycine 241, isoleucine 242, histidine 243, glutamine 285, and glutamate 299 each contribute to the ATP site. Residues aspartate 133–valine 328 enclose the ATP-grasp 1 domain. Mg(2+) contacts are provided by glutamine 285, glutamate 299, and asparagine 301. 3 residues coordinate Mn(2+): glutamine 285, glutamate 299, and asparagine 301. Residues valine 404–alanine 553 form an oligomerization domain region. A carbamoyl phosphate synthetic domain region spans residues asparagine 554 to asparagine 936. In terms of domain architecture, ATP-grasp 2 spans glutamine 679–alanine 870. Arginine 715, histidine 754, leucine 756, glutamate 761, glycine 786, valine 787, histidine 788, serine 789, glutamine 829, and glutamate 841 together coordinate ATP. The Mg(2+) site is built by glutamine 829, glutamate 841, and asparagine 843. Mn(2+) contacts are provided by glutamine 829, glutamate 841, and asparagine 843. The MGS-like domain maps to serine 937–lysine 1073. The segment at serine 937 to lysine 1073 is allosteric domain.

It belongs to the CarB family. In terms of assembly, composed of two chains; the small (or glutamine) chain promotes the hydrolysis of glutamine to ammonia, which is used by the large (or ammonia) chain to synthesize carbamoyl phosphate. Tetramer of heterodimers (alpha,beta)4. Mg(2+) is required as a cofactor. Requires Mn(2+) as cofactor.

It carries out the reaction hydrogencarbonate + L-glutamine + 2 ATP + H2O = carbamoyl phosphate + L-glutamate + 2 ADP + phosphate + 2 H(+). The catalysed reaction is hydrogencarbonate + NH4(+) + 2 ATP = carbamoyl phosphate + 2 ADP + phosphate + 2 H(+). The protein operates within amino-acid biosynthesis; L-arginine biosynthesis; carbamoyl phosphate from bicarbonate: step 1/1. It functions in the pathway pyrimidine metabolism; UMP biosynthesis via de novo pathway; (S)-dihydroorotate from bicarbonate: step 1/3. In terms of biological role, large subunit of the glutamine-dependent carbamoyl phosphate synthetase (CPSase). CPSase catalyzes the formation of carbamoyl phosphate from the ammonia moiety of glutamine, carbonate, and phosphate donated by ATP, constituting the first step of 2 biosynthetic pathways, one leading to arginine and/or urea and the other to pyrimidine nucleotides. The large subunit (synthetase) binds the substrates ammonia (free or transferred from glutamine from the small subunit), hydrogencarbonate and ATP and carries out an ATP-coupled ligase reaction, activating hydrogencarbonate by forming carboxy phosphate which reacts with ammonia to form carbamoyl phosphate. This is Carbamoyl phosphate synthase large chain from Escherichia coli O6:H1 (strain CFT073 / ATCC 700928 / UPEC).